The chain runs to 480 residues: Initiation-specific alpha-1,6-mannosyltransferase (480 aa).

At 1–15 (MSRKLSHLIATRKSK) the chain is on the cytoplasmic side. A helical; Signal-anchor for type II membrane protein transmembrane segment spans residues 16-30 (TIVVTVLLIYSLLTF). The Lumenal portion of the chain corresponds to 31-480 (HLSNKRLLSQ…EDADKNAGHK (450 aa)). The DXD motif motif lies at 187–189 (DMD). Asn203, Asn281, Asn341, and Asn393 each carry an N-linked (GlcNAc...) asparagine glycan.

Belongs to the glycosyltransferase 32 family. Mn(2+) serves as cofactor. Post-translationally, glycosylated.

It localises to the endoplasmic reticulum membrane. Its subcellular location is the golgi apparatus membrane. The enzyme catalyses Transfers an alpha-D-mannosyl residue from GDP-mannose into lipid-linked oligosaccharide, forming an alpha-(1-&gt;6)-D-mannosyl-D-mannose linkage.. Its function is as follows. Mannosyltransferase involved in outer chain elongation of asparagine-linked oligosaccharides of the type Man(9)GlcNAc(2). Adds the first alpha-1,6-mannose to the Man(8)GlcNAc(2) and Man(9)GlcNAc(2), but not Man(5)GlcNAc(2), endoplasmic reticulum intermediates. Represents the first enzymatic event required for synthesis of outer chain mannose linkages on yeast secretory proteins. Also has the potential to transfer a second alpha-1,6-mannose to the Man(8)GlcNAc(2) core oligosaccharide. The protein is Initiation-specific alpha-1,6-mannosyltransferase of Saccharomyces cerevisiae (strain ATCC 204508 / S288c) (Baker's yeast).